We begin with the raw amino-acid sequence, 144 residues long: Ethylene-responsive transcription factor ERF019 (144 aa).

A DNA-binding region (AP2/ERF) is located at residues 13–72 (KYKGIRRRKWGKWVSEIRVPGTRDRLWLGSFSTAEGAAVAHDVAFFCLHQPDSLESLNFP).

It belongs to the AP2/ERF transcription factor family. ERF subfamily.

It localises to the nucleus. Functionally, probably acts as a transcriptional activator. Binds to the GCC-box pathogenesis-related promoter element. May be involved in the regulation of gene expression by stress factors and by components of stress signal transduction pathways. This is Ethylene-responsive transcription factor ERF019 (ERF019) from Arabidopsis thaliana (Mouse-ear cress).